The chain runs to 177 residues: Large ribosomal subunit protein uL6 (177 aa).

This sequence belongs to the universal ribosomal protein uL6 family. In terms of assembly, part of the 50S ribosomal subunit.

Functionally, this protein binds to the 23S rRNA, and is important in its secondary structure. It is located near the subunit interface in the base of the L7/L12 stalk, and near the tRNA binding site of the peptidyltransferase center. In Pseudomonas fluorescens (strain SBW25), this protein is Large ribosomal subunit protein uL6.